The sequence spans 1673 residues: Protein-methionine sulfoxide oxidase mical3b (1673 aa).

The monooxygenase domain stretch occupies residues 2–492 (WDGQSEMCQA…RHLIDTGEGP (491 aa)). Residues C96, 96–124 (CGLRTAIELGFLGARVVLVEKRDAFSRNN), E115, R117, R122, N124, and D396 contribute to the FAD site. The 107-residue stretch at 512–618 (MARYSKLLSW…YLSQLHELLK (107 aa)) folds into the Calponin-homology (CH) domain. Residues 647-714 (SKLGQSLSRK…PKASEGHSKV (68 aa)) are disordered. Residues 661 to 671 (DKKEKEADSVG) show a composition bias toward basic and acidic residues. The region spanning 791–853 (DVCYFCGRRV…KHHFSFRLAS (63 aa)) is the LIM zinc-binding domain. The span at 882–892 (LSSLGSVGTAT) shows a compositional bias: low complexity. Disordered stretches follow at residues 882 to 901 (LSSLGSVGTATPDSWSSSTH), 918 to 938 (RIELENYKPSPQKQDSPLQEV), 951 to 1100 (SLQE…KRSE), 1159 to 1188 (QSARICDSSTQTHSVTDLQETSPLGPTDGD), and 1357 to 1393 (GPDADGDVKEKKRSSLFSPRKSRKNGNAAAESGRETG). Positions 973 to 992 (LVWKKGEELHARTNGERKLD) are enriched in basic and acidic residues. 2 stretches are compositionally biased toward acidic residues: residues 993 to 1002 (LEEELKEEEG) and 1010 to 1041 (EGEEEGEVSEEEQDEGDSSDESYEGCSDDPDI). Residues 1081 to 1094 (SDLTPDPSTTPESS) are compositionally biased toward low complexity. Residues 1159–1182 (QSARICDSSTQTHSVTDLQETSPL) are compositionally biased toward polar residues. 2 coiled-coil regions span residues 1475-1531 (EEEL…AVEK) and 1573-1638 (QEKN…VEQR). The bMERB domain maps to 1495-1661 (KQEELRRLHR…EKEEDSDLEA (167 aa)).

Belongs to the Mical family. The cofactor is FAD.

Its subcellular location is the cytoplasm. The protein resides in the cytoskeleton. It localises to the nucleus. The enzyme catalyses L-methionyl-[F-actin] + NADPH + O2 + H(+) = L-methionyl-(R)-S-oxide-[F-actin] + NADP(+) + H2O. Its function is as follows. Monooxygenase that promotes depolymerization of F-actin by mediating oxidation of specific methionine residues on actin. Acts by modifying actin subunits through the addition of oxygen to form methionine-sulfoxide, leading to promote actin filament severing and prevent repolymerization. Involved in exocytic vesicles tethering and fusion: the monooxygenase activity is required for this process. In Danio rerio (Zebrafish), this protein is Protein-methionine sulfoxide oxidase mical3b (mical3b).